Reading from the N-terminus, the 510-residue chain is GMP synthase [glutamine-hydrolyzing] (510 aa).

The Glutamine amidotransferase type-1 domain maps to 5 to 195; that stretch reads LVLVVDFGGQ…LFNVCNLKGD (191 aa). Residue cysteine 82 is the Nucleophile of the active site. Active-site residues include histidine 169 and glutamate 171. The region spanning 196-385 is the GMPS ATP-PPase domain; that stretch reads WSMSSFAEQQ…LGIPHKLVWR (190 aa). 223-229 contacts ATP; the sequence is SGGVDSS.

As to quaternary structure, homodimer.

The catalysed reaction is XMP + L-glutamine + ATP + H2O = GMP + L-glutamate + AMP + diphosphate + 2 H(+). It functions in the pathway purine metabolism; GMP biosynthesis; GMP from XMP (L-Gln route): step 1/1. Functionally, catalyzes the synthesis of GMP from XMP. The sequence is that of GMP synthase [glutamine-hydrolyzing] from Clostridium botulinum (strain Loch Maree / Type A3).